Here is a 602-residue protein sequence, read N- to C-terminus: Probable ATP-dependent RNA helicase ddx18 (602 aa).

Residues 1–31 are compositionally biased toward low complexity; sequence MVSTKVKPTTTTTPTTTVNKTTQPTTTTTAS. The disordered stretch occupies residues 1-108; it reads MVSTKVKPTT…NNDNNTGNVS (108 aa). Polar residues predominate over residues 50–63; sequence LASTPSVKQIQSQK. A compositionally biased stretch (acidic residues) spans 79–99; the sequence is DQEEEDQEEEEQEQEEEENEN. Residues 119–147 carry the Q motif motif; the sequence is IEFSNLPIEENTKKSIEEMGFKKMTPIQA. In terms of domain architecture, Helicase ATP-binding spans 150–325; the sequence is ILPLLEGKDL…KVSLNNSPVY (176 aa). Residue 163–170 participates in ATP binding; sequence ARTGSGKT. The DEAD box signature appears at 273 to 276; it reads DEAD. In terms of domain architecture, Helicase C-terminal spans 339–509; it reads GLEQGYVVCP…NVQDQLEKVV (171 aa). Positions 568 to 602 are disordered; the sequence is SGKADFQKKSNNKSGFAQKQYGSKFPPKDGRQFDR. A compositionally biased stretch (polar residues) spans 579-588; the sequence is NKSGFAQKQY. Over residues 593–602 the composition is skewed to basic and acidic residues; sequence PPKDGRQFDR.

The protein belongs to the DEAD box helicase family. DDX18/HAS1 subfamily.

It is found in the nucleus. The protein localises to the nucleolus. Its subcellular location is the chromosome. The enzyme catalyses ATP + H2O = ADP + phosphate + H(+). ATP-binding RNA helicase which may be involved in the ribosome biogenesis. The chain is Probable ATP-dependent RNA helicase ddx18 (ddx18) from Dictyostelium discoideum (Social amoeba).